A 341-amino-acid polypeptide reads, in one-letter code: L-threonine 3-dehydrogenase (341 aa).

Cys-38 lines the Zn(2+) pocket. Residues Thr-40 and His-43 each act as charge relay system in the active site. Positions 63, 64, 93, 96, 99, and 107 each coordinate Zn(2+). Residues Ile-175, Asp-195, Arg-200, 262–264 (LGI), and 286–287 (IY) each bind NAD(+).

It belongs to the zinc-containing alcohol dehydrogenase family. In terms of assembly, homotetramer. Zn(2+) is required as a cofactor.

It localises to the cytoplasm. It carries out the reaction L-threonine + NAD(+) = (2S)-2-amino-3-oxobutanoate + NADH + H(+). Its pathway is amino-acid degradation; L-threonine degradation via oxydo-reductase pathway; glycine from L-threonine: step 1/2. Catalyzes the NAD(+)-dependent oxidation of L-threonine to 2-amino-3-ketobutyrate. The chain is L-threonine 3-dehydrogenase from Escherichia fergusonii (strain ATCC 35469 / DSM 13698 / CCUG 18766 / IAM 14443 / JCM 21226 / LMG 7866 / NBRC 102419 / NCTC 12128 / CDC 0568-73).